We begin with the raw amino-acid sequence, 648 residues long: Zinc finger protein grt1 (648 aa).

Positions alanine 13–tyrosine 42 form a DNA-binding region, zn(2)-C6 fungal-type.

As to quaternary structure, monomer.

It localises to the nucleus. In terms of biological role, may be involved in the facilitation of anaphase progression in mitosis. This chain is Zinc finger protein grt1 (grt1), found in Schizosaccharomyces pombe (strain 972 / ATCC 24843) (Fission yeast).